Consider the following 261-residue polypeptide: Precorrin-6A synthase [deacetylating] (261 aa).

The catalysed reaction is precorrin-5 + S-adenosyl-L-methionine + H2O = precorrin-6A + acetate + S-adenosyl-L-homocysteine + 2 H(+). Its pathway is cofactor biosynthesis; adenosylcobalamin biosynthesis; cob(II)yrinate a,c-diamide from precorrin-2 (aerobic route): step 5/10. Its function is as follows. Catalyzes the methylation of C-1 in precorrin-5 and the subsequent extrusion of acetic acid from the resulting intermediate to form cobalt-precorrin-6A. This is Precorrin-6A synthase [deacetylating] (cobF) from Sinorhizobium sp.